Reading from the N-terminus, the 142-residue chain is Transcriptional regulator MraZ (142 aa).

2 consecutive SpoVT-AbrB domains span residues 5 to 51 and 77 to 120; these read ASSL…PRPE and AMDV…DKAT.

It belongs to the MraZ family. In terms of assembly, forms oligomers.

It is found in the cytoplasm. Its subcellular location is the nucleoid. This is Transcriptional regulator MraZ from Acidovorax ebreus (strain TPSY) (Diaphorobacter sp. (strain TPSY)).